The sequence spans 664 residues: ATP-dependent RNA helicase MSS116, mitochondrial (664 aa).

The N-terminal 26 residues, 1 to 26 (MLTSILIKGRTPVLASRNLLAALSNC), are a transit peptide targeting the mitochondrion. Positions 42-79 (NRDQRNFGRNQRNNNSNRYRNSRFNSRPRTRSREDDDE) are disordered. Residues 48–68 (FGRNQRNNNSNRYRNSRFNSR) are compositionally biased toward low complexity. The Q motif signature appears at 106 to 134 (SLLEEGVLDKEIHKAITRMEFPGLTPVQQ). The region spanning 139–326 (PILSSEDHDV…NNIMNKKECL (188 aa)) is the Helicase ATP-binding domain. Position 152–159 (152–159 (AKTGTGKT)) interacts with ATP. The DEAD box signature appears at 267–270 (DEAD). The Helicase C-terminal domain maps to 355 to 512 (SIFAAVEHIK…EKYEPSEEIK (158 aa)). Residues 602-664 (GNNKSYDYDD…NYSSRNSNIY (63 aa)) are disordered. A compositionally biased stretch (basic and acidic residues) spans 628-638 (QNRDYDDEPFR). The segment covering 639-649 (RSNNNRRSFSR) has biased composition (low complexity). A compositionally biased stretch (polar residues) spans 653–664 (KNNYSSRNSNIY).

The protein belongs to the DEAD box helicase family. DDX18/HAS1 subfamily.

Its subcellular location is the mitochondrion matrix. It carries out the reaction ATP + H2O = ADP + phosphate + H(+). Its function is as follows. ATP-dependent RNA helicase required for mitochondrial splicing of group I and II introns. Specifically involved in the ATP-dependent splicing of the bl1 intron of COB. Also required for efficient mitochondrial translation. In Saccharomyces cerevisiae (strain ATCC 204508 / S288c) (Baker's yeast), this protein is ATP-dependent RNA helicase MSS116, mitochondrial (MSS116).